We begin with the raw amino-acid sequence, 598 residues long: Elongation factor 4 (598 aa).

Residues 5–187 (ANIRNFSIIA…ALVEFIPAPT (183 aa)) form the tr-type G domain. Residues 17 to 22 (DHGKST) and 134 to 137 (NKID) each bind GTP.

Belongs to the TRAFAC class translation factor GTPase superfamily. Classic translation factor GTPase family. LepA subfamily.

It localises to the cell inner membrane. It catalyses the reaction GTP + H2O = GDP + phosphate + H(+). Required for accurate and efficient protein synthesis under certain stress conditions. May act as a fidelity factor of the translation reaction, by catalyzing a one-codon backward translocation of tRNAs on improperly translocated ribosomes. Back-translocation proceeds from a post-translocation (POST) complex to a pre-translocation (PRE) complex, thus giving elongation factor G a second chance to translocate the tRNAs correctly. Binds to ribosomes in a GTP-dependent manner. The chain is Elongation factor 4 from Psychrobacter cryohalolentis (strain ATCC BAA-1226 / DSM 17306 / VKM B-2378 / K5).